The following is a 58-amino-acid chain: Potassium channel toxin alpha-KTx 26.2 (58 aa).

The N-terminal stretch at 1 to 19 is a signal peptide; it reads MKTIFVVILVLFVLSAMLA. 3 disulfides stabilise this stretch: cysteine 31-cysteine 49, cysteine 35-cysteine 54, and cysteine 39-cysteine 56.

Belongs to the short scorpion toxin superfamily. Potassium channel inhibitor family. Alpha-KTx 26 subfamily. In terms of tissue distribution, expressed by the venom gland.

The protein resides in the secreted. In terms of biological role, inhibits voltage-gated potassium channels. This Lychas mucronatus (Chinese swimming scorpion) protein is Potassium channel toxin alpha-KTx 26.2.